The sequence spans 206 residues: Thymidylate kinase (206 aa).

Gly10–Ser17 contacts ATP.

It belongs to the thymidylate kinase family.

The catalysed reaction is dTMP + ATP = dTDP + ADP. Phosphorylation of dTMP to form dTDP in both de novo and salvage pathways of dTTP synthesis. The protein is Thymidylate kinase of Neisseria meningitidis serogroup C / serotype 2a (strain ATCC 700532 / DSM 15464 / FAM18).